The following is a 375-amino-acid chain: Growth/differentiation factor 8 (375 aa).

The signal sequence occupies residues 1 to 18 (MQKLQIFVYIYLFMLLVA). A propeptide spanning residues 19–266 (GPVDLNENSE…VTDTPKRSRR (248 aa)) is cleaved from the precursor. N-linked (GlcNAc...) asparagine glycosylation is found at Asn-48 and Asn-71. 4 cysteine pairs are disulfide-bonded: Cys-272–Cys-282, Cys-281–Cys-340, Cys-309–Cys-372, and Cys-313–Cys-374.

Belongs to the TGF-beta family. As to quaternary structure, homodimer; disulfide-linked. Interacts with WFIKKN2, leading to inhibit its activity. Interacts with FSTL3. Post-translationally, synthesized as large precursor molecule that undergoes proteolytic cleavage to generate an N-terminal propeptide and a disulfide linked C-terminal dimer, which is the biologically active molecule. The circulating form consists of a latent complex of the C-terminal dimer and other proteins, including its propeptide, which maintain the C-terminal dimer in a latent, inactive state. Ligand activation requires additional cleavage of the prodomain by a tolloid-like metalloproteinase.

It is found in the secreted. In terms of biological role, acts specifically as a negative regulator of skeletal muscle growth. This chain is Growth/differentiation factor 8 (MSTN), found in Capra ibex (Ibex).